The chain runs to 381 residues: Glycerate kinase (381 aa).

This sequence belongs to the glycerate kinase type-1 family.

It catalyses the reaction (R)-glycerate + ATP = (2R)-3-phosphoglycerate + ADP + H(+). The polypeptide is Glycerate kinase (glxK) (Bacillus cereus (strain ATCC 10987 / NRS 248)).